The following is a 165-amino-acid chain: 3-isopropylmalate dehydratase small subunit (165 aa).

The protein belongs to the LeuD family. LeuD type 2 subfamily. Heterodimer of LeuC and LeuD.

It carries out the reaction (2R,3S)-3-isopropylmalate = (2S)-2-isopropylmalate. It functions in the pathway amino-acid biosynthesis; L-leucine biosynthesis; L-leucine from 3-methyl-2-oxobutanoate: step 2/4. Catalyzes the isomerization between 2-isopropylmalate and 3-isopropylmalate, via the formation of 2-isopropylmaleate. This chain is 3-isopropylmalate dehydratase small subunit, found in Lachnoclostridium phytofermentans (strain ATCC 700394 / DSM 18823 / ISDg) (Clostridium phytofermentans).